The following is an 878-amino-acid chain: Protein translocase subunit SecA (878 aa).

ATP-binding positions include Gln-81, 99–103 (GEGKT), and Asp-489.

It belongs to the SecA family.

The protein resides in the plastid. Its subcellular location is the chloroplast stroma. It is found in the chloroplast thylakoid membrane. It catalyses the reaction ATP + H2O + cellular proteinSide 1 = ADP + phosphate + cellular proteinSide 2.. Has a central role in coupling the hydrolysis of ATP to the transfer of proteins across the thylakoid membrane. This Thalassiosira pseudonana (Marine diatom) protein is Protein translocase subunit SecA.